Reading from the N-terminus, the 2222-residue chain is Protein SWEETIE (2222 aa).

10 HEAT repeats span residues 37–75, 228–265, 331–368, 510–540, 541–578, 611–648, 768–807, 898–936, 968–1008, and 1029–1066; these read LLCFEILSDLISAIDEEPKESLLVTQRKCEDALYSLVTL, SEFDTLASYCVKGIEDSESSVRDAFAEALGSLLALGMH, SELQDYSLPIMDMLRGDSSIDAHALACVLYILRVGVID, PARLPRSVLEVSKKMLTESRRNVTVASSEKE, AGWLLLSSLLNSMPKEEFGDQDFDILILWTDVFAGNPE, CNDGILLQPVLANLRSALSCVSTMANKRFSDVKTLVDI, QGMLSLLSVIQQCLKAGKKQQWRTASLTNICAGLLAGLKA, MALSSLVPATVNSVSSLTKTSVLGLKIWALHGLLLTIEA, QGIG…WQEI, and VSVHIHVKNLLMTLASRQPIIRRLSVSTLRHLVEKDPV. Positions 1133-1165 are disordered; the sequence is IAENDPAYTRENLGDDDEDMVSSSSGKSIRANP. HEAT repeat units follow at residues 1238–1269, 1270–1306, 1312–1354, 1372–1410, 1434–1474, 1550–1586, 1783–1820, 1836–1874, 1880–1917, and 1966–2006; these read MRPIGVGLLSTILEKFKLVADPELPGHLLLEQ, YQAQLLSAVRTALDANSGPVLLEAGLQLATKIMTSGI, VAVK…AHAS, VEFEALLPMFSKSSDLLGRYWIQVLKGYSYICLCQNLKK, EAWP…LEAE, DLCQELLQVLSYSFHMDSSWDILAVSVVQQISQNCPK, VMLKSCQISIAAVVKDSNVQVQATVLQVLKSLVQRYNN, GDIVSLMQRALLKPVNTESVVIAGECLRFIMLLQTHSIT, GFMSLFLEVVLVVFSKTSDGVSQEVLELRNVAVRLVSH, and AMDI…QVST. A disordered region spans residues 1992–2203; that stretch reads EALSTMPTSF…DESSKEHVGA (212 aa). Residues 1996–2009 are compositionally biased toward polar residues; the sequence is TMPTSFNQVSTVES. Over residues 2010–2027 the composition is skewed to acidic residues; sequence GTDEEEEEEEDDDDDDWD. Polar residues predominate over residues 2028–2040; it reads TFQSFPASTNLEG. Positions 2062 to 2072 are enriched in acidic residues; sequence QDDESNAEETD. 2 stretches are compositionally biased toward basic and acidic residues: residues 2073-2096 and 2108-2124; these read DQHLASDHATDITREDSNDKSKEV and TREDSVDKSKEVEEETV. The span at 2150-2164 shows a compositional bias: polar residues; that stretch reads NEQSVESKNLESENI. Residues 2191 to 2202 show a composition bias toward basic and acidic residues; sequence SPEDESSKEHVG.

The protein belongs to the HEATR5 family.

In terms of biological role, may regulate multiple metabolic, hormonal and stress-related pathways. Required for carbohydrate metabolism and homoeostasis. May also monitor ethylene biosynthesis and senescence. This Arabidopsis thaliana (Mouse-ear cress) protein is Protein SWEETIE.